Here is a 242-residue protein sequence, read N- to C-terminus: Probable transcriptional regulatory protein lhv_0777 (242 aa).

The tract at residues 1–22 is disordered; the sequence is MSGHSKWHNIQGRKNAQDAKRG.

This sequence belongs to the TACO1 family.

It is found in the cytoplasm. This Lactobacillus helveticus (strain DPC 4571) protein is Probable transcriptional regulatory protein lhv_0777.